The chain runs to 356 residues: 3,4-dihydroxy-2-butanone 4-phosphate synthase (356 aa).

The tract at residues 1–211 (MNAILSDQKT…ISDIVEYRMM (211 aa)) is DHBP synthase. Residues 38–39 (RE), Asp-43, 150–154 (RIGHT), and Glu-174 each bind D-ribulose 5-phosphate. Glu-39 contributes to the Mg(2+) binding site. Mg(2+) is bound at residue His-153. Residues 212-356 (NESLIRVIAE…KSTNVNETVA (145 aa)) are GTP cyclohydrolase II-like.

In the N-terminal section; belongs to the DHBP synthase family. It in the C-terminal section; belongs to the GTP cyclohydrolase II family. Mg(2+) is required as a cofactor. It depends on Mn(2+) as a cofactor.

The enzyme catalyses D-ribulose 5-phosphate = (2S)-2-hydroxy-3-oxobutyl phosphate + formate + H(+). Its pathway is cofactor biosynthesis; riboflavin biosynthesis; 2-hydroxy-3-oxobutyl phosphate from D-ribulose 5-phosphate: step 1/1. Its function is as follows. Catalyzes the conversion of D-ribulose 5-phosphate to formate and 3,4-dihydroxy-2-butanone 4-phosphate. The sequence is that of 3,4-dihydroxy-2-butanone 4-phosphate synthase (ribB) from Sulfurospirillum multivorans (Dehalospirillum multivorans).